We begin with the raw amino-acid sequence, 581 residues long: Urease subunit alpha (581 aa).

Residues 134–581 (GGFDSHIHFI…LPMTQRYFLF (448 aa)) enclose the Urease domain. The Ni(2+) site is built by H139, H141, and K222. K222 bears the N6-carboxylysine mark. H224 contacts substrate. Ni(2+)-binding residues include H251 and H277. H325 acts as the Proton donor in catalysis. D365 serves as a coordination point for Ni(2+).

Belongs to the metallo-dependent hydrolases superfamily. Urease alpha subunit family. In terms of assembly, heterotrimer of UreA (gamma), UreB (beta) and UreC (alpha) subunits. Three heterotrimers associate to form the active enzyme. The cofactor is Ni cation. In terms of processing, carboxylation allows a single lysine to coordinate two nickel ions.

It is found in the cytoplasm. The catalysed reaction is urea + 2 H2O + H(+) = hydrogencarbonate + 2 NH4(+). Its pathway is nitrogen metabolism; urea degradation; CO(2) and NH(3) from urea (urease route): step 1/1. The chain is Urease subunit alpha from Albidiferax ferrireducens (strain ATCC BAA-621 / DSM 15236 / T118) (Rhodoferax ferrireducens).